A 498-amino-acid polypeptide reads, in one-letter code: ATP synthase subunit beta, chloroplastic (498 aa).

Residue 172-179 (GGAGVGKT) coordinates ATP.

The protein belongs to the ATPase alpha/beta chains family. As to quaternary structure, F-type ATPases have 2 components, CF(1) - the catalytic core - and CF(0) - the membrane proton channel. CF(1) has five subunits: alpha(3), beta(3), gamma(1), delta(1), epsilon(1). CF(0) has four main subunits: a(1), b(1), b'(1) and c(9-12).

The protein resides in the plastid. The protein localises to the chloroplast thylakoid membrane. The catalysed reaction is ATP + H2O + 4 H(+)(in) = ADP + phosphate + 5 H(+)(out). Its function is as follows. Produces ATP from ADP in the presence of a proton gradient across the membrane. The catalytic sites are hosted primarily by the beta subunits. The polypeptide is ATP synthase subunit beta, chloroplastic (Hyophorbe lagenicaulis (Bottle palm)).